The following is a 561-amino-acid chain: Urocanate hydratase (561 aa).

NAD(+) contacts are provided by residues 52 to 53, Gln-130, 176 to 178, Glu-196, Arg-201, 242 to 243, 263 to 267, 273 to 274, and Tyr-322; these read GG, GMG, NA, QTSAH, and YL. Residue Cys-410 is part of the active site. Gly-492 is an NAD(+) binding site.

It belongs to the urocanase family. The cofactor is NAD(+).

Its subcellular location is the cytoplasm. It carries out the reaction 4-imidazolone-5-propanoate = trans-urocanate + H2O. It functions in the pathway amino-acid degradation; L-histidine degradation into L-glutamate; N-formimidoyl-L-glutamate from L-histidine: step 2/3. Functionally, catalyzes the conversion of urocanate to 4-imidazolone-5-propionate. This is Urocanate hydratase from Salmonella agona (strain SL483).